We begin with the raw amino-acid sequence, 189 residues long: Peptide deformylase (189 aa).

The Fe cation site is built by Cys98 and His140. The active site involves Glu141. His144 is a Fe cation binding site.

Belongs to the polypeptide deformylase family. It depends on Fe(2+) as a cofactor.

The enzyme catalyses N-terminal N-formyl-L-methionyl-[peptide] + H2O = N-terminal L-methionyl-[peptide] + formate. Removes the formyl group from the N-terminal Met of newly synthesized proteins. Requires at least a dipeptide for an efficient rate of reaction. N-terminal L-methionine is a prerequisite for activity but the enzyme has broad specificity at other positions. The chain is Peptide deformylase from Porphyromonas gingivalis (strain ATCC 33277 / DSM 20709 / CIP 103683 / JCM 12257 / NCTC 11834 / 2561).